Reading from the N-terminus, the 266-residue chain is Undecaprenyl-diphosphatase (266 aa).

8 helical membrane-spanning segments follow: residues 1–21 (MDIFQVIVLALIQGLTEFLPI), 39–59 (QGLTFDVAVNTGSLLAVVIYF), 87–107 (WWIILATIPAVIFGFTAKDFI), 114–134 (IEVIATTTIVFGLLLWWADKL), 144–164 (VGWKKALLIGFAQAMALIPGT), 184–204 (AARFSFLMSVPVSLGAAILVV), 218–238 (ALVLGTALSFVAAYLCIHYFL), and 246–266 (MTPFVIYRLALGAILCVVIFA).

Belongs to the UppP family.

The protein localises to the cell inner membrane. It carries out the reaction di-trans,octa-cis-undecaprenyl diphosphate + H2O = di-trans,octa-cis-undecaprenyl phosphate + phosphate + H(+). In terms of biological role, catalyzes the dephosphorylation of undecaprenyl diphosphate (UPP). Confers resistance to bacitracin. The polypeptide is Undecaprenyl-diphosphatase (Shewanella loihica (strain ATCC BAA-1088 / PV-4)).